A 1045-amino-acid chain; its full sequence is Mitotic deacetylase-associated SANT domain protein (1045 aa).

Met-1 is subject to N-acetylmethionine. Disordered stretches follow at residues 1 to 68 (MNLQ…PPPS) and 99 to 159 (NSVM…PTYY). Positions 132–146 (STWNCHSLSLYSATK) are enriched in polar residues. Lys-166 is covalently cross-linked (Glycyl lysine isopeptide (Lys-Gly) (interchain with G-Cter in SUMO2)). Asymmetric dimethylarginine is present on Arg-193. 5 disordered regions span residues 228-264 (QVFRQGPPPPNPVAAFPPQKQQQQQQPQQQQQQQQAA), 276-305 (SMPQQPSQQPQDFGLQPAGPLGQSHLAHHS), 330-349 (APQPALPQVQIPFPRRSRRL), 378-397 (HHWPLQQPPPGSLGQPHPEA), and 410-441 (LPDGERLAPNGREREAPAMGSEEGMRAVSTGD). Over residues 240-264 (VAAFPPQKQQQQQQPQQQQQQQQAA) the composition is skewed to low complexity. The segment covering 412 to 425 (DGERLAPNGREREA) has biased composition (basic and acidic residues). Arg-447 carries the post-translational modification Omega-N-methylarginine. Ser-461 is subject to Phosphoserine. Positions 543 to 563 (QAGGLDEDGKGPEQNPAEHKP) are disordered. The span at 549–563 (EDGKGPEQNPAEHKP) shows a compositional bias: basic and acidic residues. Lys-590 is covalently cross-linked (Glycyl lysine isopeptide (Lys-Gly) (interchain with G-Cter in SUMO1); alternate). Lys-590 participates in a covalent cross-link: Glycyl lysine isopeptide (Lys-Gly) (interchain with G-Cter in SUMO2); alternate. Position 655 is a phosphothreonine (Thr-655). Ser-661 carries the phosphoserine modification. Thr-704 is subject to Phosphothreonine. Ser-709 bears the Phosphoserine mark. Residue Thr-715 is modified to Phosphothreonine. The ELM2 domain maps to 721 to 813 (PRINVGSRFQ…ETLNKLLLKK (93 aa)). One can recognise an SANT domain in the interval 828–879 (TGSDQWKMAERKLFNKGIAIYKKDFFLVQKLIQTKTVAQCVEFYYTYKKQVK). A disordered region spans residues 887–1045 (TFGDVDTSDE…NTFPCKKCGR (159 aa)). Composition is skewed to basic and acidic residues over residues 894 to 909 (SDEKSAQEEVEVDIKT) and 919 to 942 (PRRESPSEERLEPKREVKEPRKEG). The residue at position 923 (Ser-923) is a Phosphoserine. Positions 943–957 (EEEVPEIQEKEEQEE) are enriched in acidic residues. The segment covering 970–980 (ATQTLQANESA) has biased composition (polar residues).

As to quaternary structure, interacts with DNTTIP1. Identified in a histone deacetylase complex that contains DNTTIP1, HDAC1 and MIDEAS; this complex assembles into a tetramer that contains four copies of each protein chain.

The protein resides in the nucleus. The chain is Mitotic deacetylase-associated SANT domain protein from Homo sapiens (Human).